The chain runs to 250 residues: Probable transcriptional regulatory protein tll0175 (250 aa).

Belongs to the TACO1 family.

Its subcellular location is the cytoplasm. The sequence is that of Probable transcriptional regulatory protein tll0175 from Thermosynechococcus vestitus (strain NIES-2133 / IAM M-273 / BP-1).